Here is a 169-residue protein sequence, read N- to C-terminus: Fumarase E (169 aa).

The protein belongs to the MtlR/FumE family.

It carries out the reaction (S)-malate = fumarate + H2O. Functionally, in vitro catalyzes the addition of water to fumarate, forming malate. Cannot catalyze the reverse reaction. Cannot use the cis-isomer maleate as substrate. This Escherichia coli (strain K12) protein is Fumarase E.